Consider the following 419-residue polypeptide: 26S proteasome regulatory subunit 8 homolog B (419 aa).

Position 202–209 (202–209) interacts with ATP; that stretch reads GPPGTGKT. Lys-406 participates in a covalent cross-link: Glycyl lysine isopeptide (Lys-Gly) (interchain with G-Cter in ubiquitin).

The protein belongs to the AAA ATPase family. As to quaternary structure, component of the 19S regulatory particle (RP/PA700) base subcomplex of the 26S proteasome. The 26S proteasome is composed of a core protease (CP), known as the 20S proteasome, capped at one or both ends by the 19S regulatory particle (RP/PA700). The RP/PA700 complex is composed of at least 17 different subunits in two subcomplexes, the base and the lid, which form the portions proximal and distal to the 20S proteolytic core, respectively.

It localises to the cytoplasm. The protein resides in the nucleus. In terms of biological role, the 26S proteasome is involved in the ATP-dependent degradation of ubiquitinated proteins. The regulatory (or ATPase) complex confers ATP dependency and substrate specificity to the 26S complex. The sequence is that of 26S proteasome regulatory subunit 8 homolog B (RPT6B) from Arabidopsis thaliana (Mouse-ear cress).